A 91-amino-acid chain; its full sequence is Ribonuclease P protein component 4 (91 aa).

Residues cysteine 48, cysteine 51, cysteine 71, and cysteine 74 each coordinate Zn(2+).

The protein belongs to the eukaryotic/archaeal RNase P protein component 4 family. Consists of a catalytic RNA component and at least 4-5 protein subunits. It depends on Zn(2+) as a cofactor.

It localises to the cytoplasm. It catalyses the reaction Endonucleolytic cleavage of RNA, removing 5'-extranucleotides from tRNA precursor.. Part of ribonuclease P, a protein complex that generates mature tRNA molecules by cleaving their 5'-ends. This Picrophilus torridus (strain ATCC 700027 / DSM 9790 / JCM 10055 / NBRC 100828 / KAW 2/3) protein is Ribonuclease P protein component 4.